Here is a 1087-residue protein sequence, read N- to C-terminus: MRYAELQVTTHFSFLRAASSAEELFATARLMGIEALGVVDRNSLAGIVRALEASRATGLRLVVGCRLDLQDGMSILVYPTDRAAYSRLTRLLTLGKGRGGKANCIIHFDDVALYAEGLIGILVPDLADEVCAVQLRKIAEVFGDRAYVSLCLRRRPNDQLQLHELTNLAVKHRVKTIVTNDVLFHEHGRRQLQDVVTCIRTGMTIDDVGFERERHADRYLKPPEEMARLFPAYPEALARTMEIVERCRFSLEELVYQYPEEALILGMTAQQSLQHYTWEGVRARYPEGLPTHVEKTIRHELALIETMKYAPYFLTVFSIVRYARSQGILCQGRGSAANSAVCYVLGITSIDPETNDLLFERFVSQERDEPPDIDVDFEHERREEVIQWIYKTYGHDKAALCSTVTRYRAKGAIRDVGKALDLPEDLIRTLSSGIWSWSETVGERQVRELGLNPDDRRLTLTLRLAQQLMGAPRNLSQHPGGFVLTHDRLDDLVPIEPATMADRQVIEWDKDDIEALKFLKVDVLALGMLTCMAKAFALISEHKHEDIDLATIPQEDPATYAMIRKADTLGTFQIESRAQMSMLPRMKPRTFYDLVIQVAIVRPGPIQGDMVHPYLRRREGKEKVEYPTPELEAVLHKTLGVPLFQESAMRVAMVCAGFTGGEADQLRKSMATFKFTGGVSRFKDKLVNGMIRNGYTKEFAEKTFSQLEGFGSYGFPESHAASFALIAYASNYIKCYFPDVFCAALLNSQPMGFYAPAQIVRDAREHGVEVRPICINRSRWDCMLEPIDGSGGHAVRLGMRLVRGLATADAARIVAARADEPFTSVDDMWRRSGVPVASLVELAEADAFLPSLSLERRDALWAIKALRDEPLPLFTAAADREARAIAEQEEPEVELRQMTDGQNVVEDYSHTGLTLREHPLRFMRDDLAKRRIVTCAQAMTAHDGQWLMAAGLVLVRQRPGSAKGVMFITIEDETGIANIVVWPKLFERSRRVVLGASMMAINGRIQREGEVVHLVAQQLFDLSADLSSLAERDGAFRPPTGRGDEFAHGSPGSADSRGKAPPGVRARDILVPDLHIDTLKIKSRNFQ.

The tract at residues Asp1033–Val1064 is disordered.

The protein belongs to the DNA polymerase type-C family. DnaE2 subfamily.

The protein localises to the cytoplasm. It catalyses the reaction DNA(n) + a 2'-deoxyribonucleoside 5'-triphosphate = DNA(n+1) + diphosphate. In terms of biological role, DNA polymerase involved in damage-induced mutagenesis and translesion synthesis (TLS). It is not the major replicative DNA polymerase. In Rhizobium meliloti (strain 1021) (Ensifer meliloti), this protein is Error-prone DNA polymerase 2.